The chain runs to 604 residues: Linalool synthase Tps-5073L4, chloroplastic (604 aa).

The N-terminal 36 residues, 1-36 (MSSMRIYVAIMKKPSVKHVDYVDKKASKPSWRVSSS), are a transit peptide targeting the chloroplast. The (2E)-geranyl diphosphate site is built by Arg323, Asp360, Asp364, Arg501, and Asp504. 2 residues coordinate Mg(2+): Asp360 and Asp364. Positions 360–364 (DDVYD) match the DDXXD motif motif. Mg(2+) contacts are provided by Asp504, Thr508, and Glu512.

This sequence belongs to the terpene synthase family. Tpsb subfamily. As to quaternary structure, monomer. The cofactor is Mg(2+). Mn(2+) is required as a cofactor.

It is found in the plastid. The protein localises to the chloroplast. It catalyses the reaction (2E)-geranyl diphosphate + H2O = linalool + diphosphate. Its pathway is secondary metabolite biosynthesis; terpenoid biosynthesis. Monoterpene synthase (mono-TPS) involved in the biosynthesis of monoterpenes natural products. Catalyzes the conversion of (2E)-geranyl diphosphate (GPP) into linalool. In Perilla frutescens (Beefsteak mint), this protein is Linalool synthase Tps-5073L4, chloroplastic.